The sequence spans 436 residues: MEPDDFDSEDKEILSWDINDVKLPQNVKKTDWFQEWPDSYAKHIYSSEDKNAQRHLSSWAMRNTNNHNSRILKKSCLGVVVCGRDCLAEEGRKIYLRPAICDKARQKQQRKRCPNCDGPLKLIPCRGHGGFPVTNFWRHDGRFIFFQSKGEHDHPKPETKLEAEARRAMKKVNTAPSSVSLSLKGSTETRSLPGETQSQGSLPLTWSFQEGVQLPGSYSGHLIANTPQQNSLNDCFSFSKSYGLGGITDLTDQTSTVDPMKLYEKRKLSSSRTYSSGDLLPPSASGVYSDHGDLQAWSKNAALGRNHLADNCYSNYPFPLTSWPCSFSPSQNSSEPFYQQLPLEPPAAKTGCPPLWPNPAGNLYEEKVHVDFNSYVQSPAYHSPQEDPFLFTYASHPHQQYSLPSKSSKWDFEEEMTYLGLDHCNNDMLLNLCPLR.

Residues 14 to 169 constitute a DNA-binding region (GCM); sequence LSWDINDVKL…KLEAEARRAM (156 aa). Zn(2+) is bound by residues Cys76, Cys82, Cys86, Cys113, Cys116, Cys125, His152, and His154. The tract at residues 171 to 202 is disordered; it reads KVNTAPSSVSLSLKGSTETRSLPGETQSQGSL. The segment covering 174-202 has biased composition (polar residues); that stretch reads TAPSSVSLSLKGSTETRSLPGETQSQGSL.

Post-translationally, polyubiquitinated in the presence of UBE2D2 and FBXW2 (in vitro). In terms of tissue distribution, highly expressed in the placenta. Expressed in trophoblast cells of the villi.

It is found in the nucleus. Functionally, transcription factor involved in the control of expression of placental growth factor (PGF) and other placenta-specific genes. Binds to the trophoblast-specific element 2 (TSE2) of the aromatase gene enhancer. Binds to the SYDE1 promoter. Has a central role in mediating the differentiation of trophoblast cells along both the villous and extravillous pathways in placental development. In Homo sapiens (Human), this protein is Chorion-specific transcription factor GCMa (GCM1).